The following is a 371-amino-acid chain: O-phospho-L-seryl-tRNA:Cys-tRNA synthase 1 (371 aa).

Residues 78–79, asparagine 183, and 206–208 each bind pyridoxal 5'-phosphate; these read AR and SGH. Lysine 209 bears the N6-(pyridoxal phosphate)lysine mark.

The protein belongs to the SepCysS family. As to quaternary structure, homodimer. Probably interacts with SepRS. It depends on pyridoxal 5'-phosphate as a cofactor.

It carries out the reaction O-phospho-L-seryl-tRNA(Cys) + hydrogen sulfide + H(+) = L-cysteinyl-tRNA(Cys) + phosphate. Its function is as follows. Converts O-phospho-L-seryl-tRNA(Cys) (Sep-tRNA(Cys)) to L-cysteinyl-tRNA(Cys) (Cys-tRNA(Cys)). The chain is O-phospho-L-seryl-tRNA:Cys-tRNA synthase 1 from Archaeoglobus fulgidus (strain ATCC 49558 / DSM 4304 / JCM 9628 / NBRC 100126 / VC-16).